The chain runs to 112 residues: Histone H2B (112 aa).

The disordered stretch occupies residues 1–24 (MATPKSSSANRKKGGKKSHRKPKR). Basic residues predominate over residues 10-24 (NRKKGGKKSHRKPKR).

The protein belongs to the histone H2B family. In terms of assembly, the nucleosome is a histone octamer containing two molecules each of H2A, H2B, H3 and H4 assembled in one H3-H4 heterotetramer and two H2A-H2B heterodimers. The octamer wraps approximately 147 bp of DNA.

The protein resides in the nucleus. It localises to the chromosome. Core component of nucleosome. Nucleosomes wrap and compact DNA into chromatin, limiting DNA accessibility to the cellular machineries which require DNA as a template. Histones thereby play a central role in transcription regulation, DNA repair, DNA replication and chromosomal stability. DNA accessibility is regulated via a complex set of post-translational modifications of histones, also called histone code, and nucleosome remodeling. This is Histone H2B from Trypanosoma cruzi.